The chain runs to 274 residues: MNKQSLFENIKRKKSFLCVGLDTDIKKIPDHLLDDPDPIFAFNKAIVDATADYCIAYKPNLAFYESMGVKGWIAFEKTVNYIKENYPDQFIIADAKRGDIGNTSAMYARTFFEELDIDSVTVAPYMGEDSVTPFLSYEGKWVILLALTSNKGSHDFQLTEDANGERLFEKVLKKSQEWANDEQMMYVVGATQGRAFEDIRKIVPNHFLLVPGIGAQGGSLEEVCKYGMNSTCGLIVNSSRGIIYVDKTENFAAAARAAAKEVQEQMAEQLKAIL.

Residue Lys96 is the Proton donor of the active site.

This sequence belongs to the OMP decarboxylase family. Type 2 subfamily.

It catalyses the reaction orotidine 5'-phosphate + H(+) = UMP + CO2. Its pathway is pyrimidine metabolism; UMP biosynthesis via de novo pathway; UMP from orotate: step 2/2. The sequence is that of Orotidine 5'-phosphate decarboxylase from Bacteroides fragilis (strain ATCC 25285 / DSM 2151 / CCUG 4856 / JCM 11019 / LMG 10263 / NCTC 9343 / Onslow / VPI 2553 / EN-2).